Here is a 405-residue protein sequence, read N- to C-terminus: Cysteine desulfurase IscS (405 aa).

Asparagine 156 serves as a coordination point for pyridoxal 5'-phosphate. The residue at position 207 (lysine 207) is an N6-(pyridoxal phosphate)lysine. Catalysis depends on cysteine 329, which acts as the Cysteine persulfide intermediate. Residue cysteine 329 coordinates [2Fe-2S] cluster.

It belongs to the class-V pyridoxal-phosphate-dependent aminotransferase family. NifS/IscS subfamily. As to quaternary structure, homodimer. Forms a heterotetramer with IscU, interacts with other sulfur acceptors. Requires pyridoxal 5'-phosphate as cofactor.

The protein resides in the cytoplasm. The enzyme catalyses (sulfur carrier)-H + L-cysteine = (sulfur carrier)-SH + L-alanine. It participates in cofactor biosynthesis; iron-sulfur cluster biosynthesis. Its function is as follows. Master enzyme that delivers sulfur to a number of partners involved in Fe-S cluster assembly, tRNA modification or cofactor biosynthesis. Catalyzes the removal of elemental sulfur atoms from cysteine to produce alanine. Functions as a sulfur delivery protein for Fe-S cluster synthesis onto IscU, an Fe-S scaffold assembly protein, as well as other S acceptor proteins. This Dechloromonas aromatica (strain RCB) protein is Cysteine desulfurase IscS.